Reading from the N-terminus, the 372-residue chain is 4-hydroxy-3-methylbut-2-en-1-yl diphosphate synthase (flavodoxin) (372 aa).

Residues Cys-270, Cys-273, Cys-305, and Glu-312 each contribute to the [4Fe-4S] cluster site.

The protein belongs to the IspG family. The cofactor is [4Fe-4S] cluster.

It catalyses the reaction (2E)-4-hydroxy-3-methylbut-2-enyl diphosphate + oxidized [flavodoxin] + H2O + 2 H(+) = 2-C-methyl-D-erythritol 2,4-cyclic diphosphate + reduced [flavodoxin]. It participates in isoprenoid biosynthesis; isopentenyl diphosphate biosynthesis via DXP pathway; isopentenyl diphosphate from 1-deoxy-D-xylulose 5-phosphate: step 5/6. In terms of biological role, converts 2C-methyl-D-erythritol 2,4-cyclodiphosphate (ME-2,4cPP) into 1-hydroxy-2-methyl-2-(E)-butenyl 4-diphosphate. This chain is 4-hydroxy-3-methylbut-2-en-1-yl diphosphate synthase (flavodoxin), found in Escherichia coli O8 (strain IAI1).